Here is a 704-residue protein sequence, read N- to C-terminus: Elongation factor G (704 aa).

The tr-type G domain maps to 8–290 (EKYRNIGICA…GVVRYLPAPN (283 aa)). GTP is bound by residues 17 to 24 (AHVDAGKT), 88 to 92 (DTPGH), and 142 to 145 (NKMD).

This sequence belongs to the TRAFAC class translation factor GTPase superfamily. Classic translation factor GTPase family. EF-G/EF-2 subfamily.

It localises to the cytoplasm. Its function is as follows. Catalyzes the GTP-dependent ribosomal translocation step during translation elongation. During this step, the ribosome changes from the pre-translocational (PRE) to the post-translocational (POST) state as the newly formed A-site-bound peptidyl-tRNA and P-site-bound deacylated tRNA move to the P and E sites, respectively. Catalyzes the coordinated movement of the two tRNA molecules, the mRNA and conformational changes in the ribosome. This is Elongation factor G from Francisella tularensis subsp. mediasiatica (strain FSC147).